We begin with the raw amino-acid sequence, 1092 residues long: DNA polymerase II large subunit (1092 aa).

Belongs to the archaeal DNA polymerase II family. In terms of assembly, heterodimer of a large subunit and a small subunit.

The catalysed reaction is DNA(n) + a 2'-deoxyribonucleoside 5'-triphosphate = DNA(n+1) + diphosphate. It carries out the reaction Exonucleolytic cleavage in the 3'- to 5'-direction to yield nucleoside 5'-phosphates.. Its function is as follows. Possesses two activities: a DNA synthesis (polymerase) and an exonucleolytic activity that degrades single-stranded DNA in the 3'- to 5'-direction. Has a template-primer preference which is characteristic of a replicative DNA polymerase. The chain is DNA polymerase II large subunit (polC) from Methanothermobacter thermautotrophicus (strain ATCC 29096 / DSM 1053 / JCM 10044 / NBRC 100330 / Delta H) (Methanobacterium thermoautotrophicum).